A 72-amino-acid polypeptide reads, in one-letter code: Translation initiation factor IF-1 (72 aa).

Residues 2–72 (AKDDVIEVEG…TRGRITYRYK (71 aa)) form the S1-like domain. At Tyr60 the chain carries Phosphotyrosine.

It belongs to the IF-1 family. In terms of assembly, component of the 30S ribosomal translation pre-initiation complex which assembles on the 30S ribosome in the order IF-2 and IF-3, IF-1 and N-formylmethionyl-tRNA(fMet); mRNA recruitment can occur at any time during PIC assembly.

The protein localises to the cytoplasm. Its function is as follows. One of the essential components for the initiation of protein synthesis. Stabilizes the binding of IF-2 and IF-3 on the 30S subunit to which N-formylmethionyl-tRNA(fMet) subsequently binds. Helps modulate mRNA selection, yielding the 30S pre-initiation complex (PIC). Upon addition of the 50S ribosomal subunit IF-1, IF-2 and IF-3 are released leaving the mature 70S translation initiation complex. This chain is Translation initiation factor IF-1, found in Bacillus subtilis (strain 168).